The chain runs to 268 residues: MDFLTAIVLGVVQGVSEWLPISSKTQVMFVSQLLLSATPELAYSLGLFLEAASVLAALIYFRLVYLKILRGFLGDAEGRKWLTYVIVTTAATGAVGIPLYMAAKRYLLLGASAGWLMVVLGVAVIFNAVLLQRARSVAGLKTFDDMTLGHMALVGLAQALSVLPGISRSGITTTTLLLLGYRPDEAFKSSFVLVPIAGLGATALAYLSEGGAVATPEVITAMLIGLVVSLVTIKALLEFAKSKHVTLVNIVVGTLAIAGGITRILLSS.

The next 7 membrane-spanning stretches (helical) occupy residues leucine 41–phenylalanine 61, tryptophan 81–methionine 101, tyrosine 106–phenylalanine 126, methionine 146–isoleucine 166, phenylalanine 191–glycine 211, valine 213–isoleucine 233, and valine 245–leucine 265.

Belongs to the UppP family.

The protein localises to the cell membrane. It catalyses the reaction di-trans,octa-cis-undecaprenyl diphosphate + H2O = di-trans,octa-cis-undecaprenyl phosphate + phosphate + H(+). Its function is as follows. Catalyzes the dephosphorylation of undecaprenyl diphosphate (UPP). The polypeptide is Undecaprenyl-diphosphatase (Pyrobaculum islandicum (strain DSM 4184 / JCM 9189 / GEO3)).